The chain runs to 191 residues: Ankyrin repeat domain-containing protein 22 (191 aa).

ANK repeat units follow at residues 39-68 (NGDT…NVNL), 72-100 (KERT…MPVL), 101-130 (LIGY…EVNA), and 134-163 (YGCT…DPTI).

The polypeptide is Ankyrin repeat domain-containing protein 22 (ANKRD22) (Homo sapiens (Human)).